Consider the following 156-residue polypeptide: Endoribonuclease YbeY (156 aa).

Zn(2+) is bound by residues histidine 115, histidine 119, and histidine 125.

It belongs to the endoribonuclease YbeY family. Requires Zn(2+) as cofactor.

Its subcellular location is the cytoplasm. Its function is as follows. Single strand-specific metallo-endoribonuclease involved in late-stage 70S ribosome quality control and in maturation of the 3' terminus of the 16S rRNA. The polypeptide is Endoribonuclease YbeY (Mannheimia succiniciproducens (strain KCTC 0769BP / MBEL55E)).